The sequence spans 71 residues: Small ribosomal subunit protein bS18c (71 aa).

This sequence belongs to the bacterial ribosomal protein bS18 family. In terms of assembly, part of the 30S ribosomal subunit.

The protein localises to the plastid. Its subcellular location is the cyanelle. The polypeptide is Small ribosomal subunit protein bS18c (rps18) (Cyanophora paradoxa).